A 332-amino-acid chain; its full sequence is Serine, glycine, tyrosine and glutamine-rich protein (332 aa).

Residues 1-17 (MMKTVLLLVVLVGVAYC) form the signal peptide. A disordered region spans residues 39 to 81 (SSSSSSSSSSGGGGSSGGGASGGGGGGGSSGGGGASGGGGGGS). Positions 48–81 (SGGGGSSGGGASGGGGGGGSSGGGGASGGGGGGS) are enriched in gly residues.

Prismatic layer of shell (at protein level). Expressed primarily in the mantle with highest level in the mantle edge and lower level in the mantle pallium.

It is found in the secreted. This Margaritifera margaritifera (Freshwater pearl mussel) protein is Serine, glycine, tyrosine and glutamine-rich protein.